The primary structure comprises 3096 residues: Unconventional myosin-XVB (3096 aa).

Disordered regions lie at residues 1–330 (MGRN…GPED), 389–489 (RPPE…GWGR), 508–540 (GGMP…ETPD), and 553–649 (AGRA…GPRL). Over residues 19-33 (ASGEQESGSASADGA) the composition is skewed to low complexity. The segment covering 34–50 (PSRERRSDRGQADRAKP) has biased composition (basic and acidic residues). Positions 124-143 (RRRRKRKDKGPSARRGRRTP) are enriched in basic residues. Composition is skewed to basic and acidic residues over residues 212–222 (DWPHADTRGRE) and 261–288 (TFED…RGAE). Low complexity predominate over residues 307–330 (AVGQVPAAAGEGEAGAAAGAGPED). The segment covering 406–416 (WGRRKPDEGRG) has biased composition (basic and acidic residues). A compositionally biased stretch (basic residues) spans 417-426 (HGRGSKGRGR). The span at 427–489 (GKADEGRGHE…HQRGYEGWGR (63 aa)) shows a compositional bias: basic and acidic residues. One can recognise a Myosin motor domain in the interval 720–1394 (EDMEDLARLR…GWQRLEELRD (675 aa)). 818-825 (GHSGSGKT) is an ATP binding site. The actin-binding stretch occupies residues 1273–1295 (LEDLIARLGRSHVYFIQCLTPNP). One can recognise an IQ domain in the interval 1414-1443 (RQRVLPRMQARMRGFQARKRYLRRRAALGQ). Residues 1551-1702 (RPGQPLAKPL…PTQLEWLAGW (152 aa)) form the MyTH4 1 domain. Disordered stretches follow at residues 1802–1833 (PGIQ…VQRS), 1963–2026 (MQQR…PKSF), and 2040–2262 (QITV…LPED). Positions 1808–1820 (SLPPGPPPGPAPT) are enriched in pro residues. A compositionally biased stretch (low complexity) spans 1963 to 1980 (MQQRQQQARASEAASQAS). The span at 2059-2076 (AQEEEEEEEEEEEQEEQE) shows a compositional bias: acidic residues. Residues 2102–2116 (APKEAEAEPAKETAA) show a composition bias toward basic and acidic residues. The segment covering 2159–2170 (GPVPVPVQPSRP) has biased composition (pro residues). Basic and acidic residues predominate over residues 2176-2185 (RKIDPKDEAL). Pro residues-rich tracts occupy residues 2199–2217 (MLSP…PRPK) and 2247–2261 (HTPP…PLPE). The SH3 domain occupies 2481-2542 (KDSGYVIALR…PADIVQPAAA (62 aa)). Residues 2548–2567 (SKEQRSGWHKGQLSNGEPGL) are disordered. The MyTH4 2 domain occupies 2643–2789 (YTKAPIQESL…PPPGEMKAFL (147 aa)). An FERM domain is found at 2795–3096 (RLLLIHLPGG…ASCTEWPSIN (302 aa)).

Belongs to the TRAFAC class myosin-kinesin ATPase superfamily. Myosin family. Detected in brain, stomach and kidney.

The protein localises to the cytoplasm. In Homo sapiens (Human), this protein is Unconventional myosin-XVB.